A 230-amino-acid polypeptide reads, in one-letter code: Small ribosomal subunit protein uS3 (230 aa).

A KH type-2 domain is found at 39-107 (VRNYLRQKLA…PVHVNIEEIR (69 aa)). The segment at 210-230 (SSKPEHESKQRKAGRRNAAAN) is disordered.

It belongs to the universal ribosomal protein uS3 family. Part of the 30S ribosomal subunit. Forms a tight complex with proteins S10 and S14.

Functionally, binds the lower part of the 30S subunit head. Binds mRNA in the 70S ribosome, positioning it for translation. The polypeptide is Small ribosomal subunit protein uS3 (Neisseria meningitidis serogroup C (strain 053442)).